We begin with the raw amino-acid sequence, 461 residues long: Cysteine--tRNA ligase (461 aa).

Cysteine 28 serves as a coordination point for Zn(2+). The 'HIGH' region motif lies at 30–40 (ITVYDLCHIGH). 3 residues coordinate Zn(2+): cysteine 209, histidine 234, and glutamate 238. Residues 266 to 270 (KMSKS) carry the 'KMSKS' region motif. Lysine 269 provides a ligand contact to ATP.

It belongs to the class-I aminoacyl-tRNA synthetase family. In terms of assembly, monomer. It depends on Zn(2+) as a cofactor.

The protein localises to the cytoplasm. The enzyme catalyses tRNA(Cys) + L-cysteine + ATP = L-cysteinyl-tRNA(Cys) + AMP + diphosphate. The chain is Cysteine--tRNA ligase from Cronobacter sakazakii (strain ATCC BAA-894) (Enterobacter sakazakii).